The following is a 372-amino-acid chain: Lipoyl synthase (372 aa).

The [4Fe-4S] cluster site is built by cysteine 37, cysteine 42, cysteine 48, cysteine 63, cysteine 67, cysteine 70, and serine 292. In terms of domain architecture, Radical SAM core spans 49 to 281 (WREGTATVML…ERAALEMGFL (233 aa)). The segment at 338–372 (LTAELDPDEPRPPVAPAPASASPARLVPAASLIRR) is disordered. Low complexity predominate over residues 354-372 (APASASPARLVPAASLIRR).

The protein belongs to the radical SAM superfamily. Lipoyl synthase family. The cofactor is [4Fe-4S] cluster.

It is found in the cytoplasm. The enzyme catalyses [[Fe-S] cluster scaffold protein carrying a second [4Fe-4S](2+) cluster] + N(6)-octanoyl-L-lysyl-[protein] + 2 oxidized [2Fe-2S]-[ferredoxin] + 2 S-adenosyl-L-methionine + 4 H(+) = [[Fe-S] cluster scaffold protein] + N(6)-[(R)-dihydrolipoyl]-L-lysyl-[protein] + 4 Fe(3+) + 2 hydrogen sulfide + 2 5'-deoxyadenosine + 2 L-methionine + 2 reduced [2Fe-2S]-[ferredoxin]. The protein operates within protein modification; protein lipoylation via endogenous pathway; protein N(6)-(lipoyl)lysine from octanoyl-[acyl-carrier-protein]: step 2/2. Catalyzes the radical-mediated insertion of two sulfur atoms into the C-6 and C-8 positions of the octanoyl moiety bound to the lipoyl domains of lipoate-dependent enzymes, thereby converting the octanoylated domains into lipoylated derivatives. This Sorangium cellulosum (strain So ce56) (Polyangium cellulosum (strain So ce56)) protein is Lipoyl synthase.